A 144-amino-acid polypeptide reads, in one-letter code: Large ribosomal subunit protein uL15 (144 aa).

A disordered region spans residues Met1–Arg59. Over residues Arg21–Gly31 the composition is skewed to gly residues.

It belongs to the universal ribosomal protein uL15 family. As to quaternary structure, part of the 50S ribosomal subunit.

Its function is as follows. Binds to the 23S rRNA. This chain is Large ribosomal subunit protein uL15, found in Pseudoalteromonas atlantica (strain T6c / ATCC BAA-1087).